A 406-amino-acid chain; its full sequence is L-methionine gamma-lyase (406 aa).

Pyridoxal 5'-phosphate is bound by residues 76–78 and 106–107; these read YQR and GM. Tyr-132 provides a ligand contact to L-homocysteine. 219 to 221 contacts pyridoxal 5'-phosphate; it reads SAT. N6-(pyridoxal phosphate)lysine is present on Lys-222. L-homocysteine is bound at residue Arg-380. Residue Arg-380 participates in L-methionine binding.

The protein belongs to the trans-sulfuration enzymes family. L-methionine gamma-lyase subfamily. Homotetramer. The cofactor is pyridoxal 5'-phosphate.

It catalyses the reaction L-methionine + H2O = methanethiol + 2-oxobutanoate + NH4(+). It carries out the reaction L-homocysteine + H2O = 2-oxobutanoate + hydrogen sulfide + NH4(+) + H(+). Its activity is regulated as follows. Is inhibited in vitro by carbonyl reagents, completely inactivated by DL-propargylglycine, and unaffected by metal-chelating agents. In terms of biological role, catalyzes the alpha,gamma-elimination of L-methionine to produce methanethiol, 2-oxobutanoate and ammonia. May be responsible for the production of methanethiol associated with desirable Cheddar-type sulfur notes during cheese ripening. Is also able to catalyze the alpha,gamma-elimination of L-homocysteine and DL-selenomethionine, but has no activity toward L-cysteine, L-cystathionine, S-adenosyl-L-homocysteine and D-methionine. The sequence is that of L-methionine gamma-lyase from Brevibacterium aurantiacum.